Consider the following 87-residue polypeptide: Homeotic protein ultrabithorax (87 aa).

Residues 22-27 (FYPWMA) carry the Antp-type hexapeptide motif.

This sequence belongs to the Antp homeobox family. In terms of tissue distribution, in the embryo, expression is seen in the epidermis, somatic and visceral mesoderm, and the peripheral and central nervous system.

The protein resides in the nucleus. Functionally, sequence-specific transcription factor which is part of a developmental regulatory system that provides cells with specific positional identities on the anterior-posterior axis. Binds the consensus region 5'-TTAAT[GT][GA]-3'. This homeotic protein controls development of the cells in the posterior thoracic and first abdominal segments. It activates the synthesis of the decapentaplegic (DPP) growth factor. The sequence is that of Homeotic protein ultrabithorax (Ubx) from Drosophila hydei (Fruit fly).